The following is a 348-amino-acid chain: Zinc finger protein 843 (348 aa).

Residues 33–55 (CKCKACGRGFTQSASLLQHWRVH) form a C2H2-type 1 zinc finger. Residues 145–167 (FCCCSCGDSVNEKTSLSQRVLPH) form a C2H2-type 2; degenerate zinc finger. The span at 184 to 195 (APSSVAPDSTSG) shows a compositional bias: polar residues. Disordered stretches follow at residues 184–203 (APSS…GSPG) and 256–329 (ATQP…WRGA).

The protein is Zinc finger protein 843 (ZNF843) of Homo sapiens (Human).